A 235-amino-acid chain; its full sequence is Large ribosomal subunit protein uL1 (235 aa).

Belongs to the universal ribosomal protein uL1 family. Part of the 50S ribosomal subunit.

Binds directly to 23S rRNA. The L1 stalk is quite mobile in the ribosome, and is involved in E site tRNA release. Its function is as follows. Protein L1 is also a translational repressor protein, it controls the translation of the L11 operon by binding to its mRNA. In Nitratidesulfovibrio vulgaris (strain DSM 19637 / Miyazaki F) (Desulfovibrio vulgaris), this protein is Large ribosomal subunit protein uL1.